We begin with the raw amino-acid sequence, 41 residues long: SPAVQEKAAWPELVGKTPEEARAQILLDKPNANVVVLEHHD.

Its function is as follows. Inhibits chymotrypsin. This chain is Chymotrypsin inhibitor, found in Eisenia hortensis (European nightcrawler).